The chain runs to 378 residues: Coiled-coil domain-containing protein 74A (378 aa).

Disordered regions lie at residues 1 to 52 (MSGA…RNLD), 128 to 211 (GGPS…EEPL), and 301 to 328 (EGSQRPQAAPEEASFPRDQEATHFPKVS). Over residues 34–44 (LRPQSPQLRQS) the composition is skewed to polar residues. A coiled-coil region spans residues 47-90 (QKRNLDLEKSLQFLQQQHSEMLAKLHEEIEHLKRENKDLHYKLI). Basic residues predominate over residues 141 to 151 (RTHRPGGKRGR). Polar residues predominate over residues 165-182 (DSLSMSSFQSVKSISNSG). Basic and acidic residues-rich tracts occupy residues 194 to 205 (QDSKADVSQKAD) and 314 to 323 (SFPRDQEATH).

This Homo sapiens (Human) protein is Coiled-coil domain-containing protein 74A (CCDC74A).